A 582-amino-acid polypeptide reads, in one-letter code: ATP-dependent lipid A-core flippase (582 aa).

5 helical membrane passes run 15 to 35 (LWPI…ALVI), 68 to 88 (YVVV…SYCL), 140 to 160 (GALI…AVML), 161 to 181 (YTSW…AVLI), and 254 to 274 (VQII…VPTI). The 284-residue stretch at 27 to 310 (VVSGIALVIN…LTNVNAQFQK (284 aa)) folds into the ABC transmembrane type-1 domain. Residues 342-578 (LSFKNVTFTY…NGAYKQLHHI (237 aa)) form the ABC transporter domain. Position 376–383 (376–383 (GRSGSGKS)) interacts with ATP.

It belongs to the ABC transporter superfamily. Lipid exporter (TC 3.A.1.106) family. Homodimer.

The protein resides in the cell inner membrane. It carries out the reaction ATP + H2O + lipid A-core oligosaccharideSide 1 = ADP + phosphate + lipid A-core oligosaccharideSide 2.. Its function is as follows. Involved in lipopolysaccharide (LPS) biosynthesis. Translocates lipid A-core from the inner to the outer leaflet of the inner membrane. Transmembrane domains (TMD) form a pore in the inner membrane and the ATP-binding domain (NBD) is responsible for energy generation. This is ATP-dependent lipid A-core flippase from Pasteurella multocida (strain Pm70).